A 336-amino-acid polypeptide reads, in one-letter code: Ribosomal RNA small subunit methyltransferase C (336 aa).

This sequence belongs to the methyltransferase superfamily. RsmC family. In terms of assembly, monomer.

Its subcellular location is the cytoplasm. It carries out the reaction guanosine(1207) in 16S rRNA + S-adenosyl-L-methionine = N(2)-methylguanosine(1207) in 16S rRNA + S-adenosyl-L-homocysteine + H(+). Specifically methylates the guanine in position 1207 of 16S rRNA in the 30S particle. In Hamiltonella defensa subsp. Acyrthosiphon pisum (strain 5AT), this protein is Ribosomal RNA small subunit methyltransferase C.